The following is a 508-amino-acid chain: Vacuolar serine-type carboxypeptidase ATG42 (508 aa).

Positions 1-24 (MKYLNLVFVLQLLISIKYASFGRA) are cleaved as a signal peptide. Intrachain disulfides connect Cys132-Cys375, Cys267-Cys281, Cys291-Cys314, Cys298-Cys307, and Cys336-Cys345. An N-linked (GlcNAc...) asparagine glycan is attached at Asn163. The active site involves Ser219. The N-linked (GlcNAc...) asparagine glycan is linked to Asn242. Residues Asn339 and Asn371 are each glycosylated (N-linked (GlcNAc...) asparagine). Asp415 is an active-site residue. Cys418 contacts substrate. Residue His474 is part of the active site. A substrate-binding site is contributed by Met475.

It belongs to the peptidase S10 family.

The protein localises to the vacuole lumen. It catalyses the reaction Release of a C-terminal amino acid with broad specificity.. Vacuolar serine-type carboxypeptidase involved in vacuolar zymogen activation, breakdown of the autophagic body, and autophagosome-dependent protein synthesis. Plays a key role in phytochelatin (PC) synthesis from glutathione (GSH) by cleaving the Gly from GSH and form the PC-peptides of the structure (gamma-Glu-Cys)2-Gly. Also involved in resistance to xenobiotics via the degradation of glutathione-S-conjugates. This Saccharomyces cerevisiae (strain ATCC 204508 / S288c) (Baker's yeast) protein is Vacuolar serine-type carboxypeptidase ATG42.